Here is a 263-residue protein sequence, read N- to C-terminus: S-adenosylmethionine decarboxylase proenzyme (263 aa).

Ser-113 functions as the Schiff-base intermediate with substrate; via pyruvic acid in the catalytic mechanism. Ser-113 bears the Pyruvic acid (Ser); by autocatalysis mark. Catalysis depends on His-118, which acts as the Proton acceptor; for processing activity. Catalysis depends on Cys-141, which acts as the Proton donor; for catalytic activity.

Belongs to the prokaryotic AdoMetDC family. Type 2 subfamily. Heterooctamer of four alpha and four beta chains arranged as a tetramer of alpha/beta heterodimers. Requires pyruvate as cofactor. Post-translationally, is synthesized initially as an inactive proenzyme. Formation of the active enzyme involves a self-maturation process in which the active site pyruvoyl group is generated from an internal serine residue via an autocatalytic post-translational modification. Two non-identical subunits are generated from the proenzyme in this reaction, and the pyruvate is formed at the N-terminus of the alpha chain, which is derived from the carboxyl end of the proenzyme. The post-translation cleavage follows an unusual pathway, termed non-hydrolytic serinolysis, in which the side chain hydroxyl group of the serine supplies its oxygen atom to form the C-terminus of the beta chain, while the remainder of the serine residue undergoes an oxidative deamination to produce ammonia and the pyruvoyl group blocking the N-terminus of the alpha chain.

The catalysed reaction is S-adenosyl-L-methionine + H(+) = S-adenosyl 3-(methylsulfanyl)propylamine + CO2. It functions in the pathway amine and polyamine biosynthesis; S-adenosylmethioninamine biosynthesis; S-adenosylmethioninamine from S-adenosyl-L-methionine: step 1/1. Catalyzes the decarboxylation of S-adenosylmethionine to S-adenosylmethioninamine (dcAdoMet), the propylamine donor required for the synthesis of the polyamines spermine and spermidine from the diamine putrescine. This Marinobacter nauticus (strain ATCC 700491 / DSM 11845 / VT8) (Marinobacter aquaeolei) protein is S-adenosylmethionine decarboxylase proenzyme.